Reading from the N-terminus, the 38-residue chain is Large ribosomal subunit protein bL36 (38 aa).

It belongs to the bacterial ribosomal protein bL36 family.

The sequence is that of Large ribosomal subunit protein bL36 from Psychrobacter cryohalolentis (strain ATCC BAA-1226 / DSM 17306 / VKM B-2378 / K5).